The sequence spans 1066 residues: FHIP family protein GI14169 (1066 aa).

A compositionally biased stretch (polar residues) spans methionine 1 to glutamine 11. The interval methionine 1–proline 35 is disordered. The segment covering serine 12 to threonine 30 has biased composition (low complexity). A Phosphoserine modification is found at serine 500. Residues glycine 651–aspartate 682 are disordered. Low complexity predominate over residues threonine 655–serine 678. A Phosphoserine modification is found at serine 820. Disordered stretches follow at residues proline 821–alanine 913 and serine 935–phenylalanine 1007. A compositionally biased stretch (low complexity) spans leucine 822–glutamine 855. The segment covering arginine 856–serine 874 has biased composition (polar residues). Over residues serine 890–alanine 913 the composition is skewed to low complexity. The span at glutamine 947–valine 971 shows a compositional bias: polar residues. The span at glycine 972 to glycine 997 shows a compositional bias: low complexity.

Belongs to the FHIP family.

The chain is FHIP family protein GI14169 from Drosophila mojavensis (Fruit fly).